Reading from the N-terminus, the 162-residue chain is MAVDMFIKIGDVKGESKDKTHAEEIDVLAWSWGMSQSGSMHMGGGGGAGKVNVQDLSFTKYIDKSTPNLMMACSSGKHYPQAKLTIRKAGGENQVEYLIITLKEVLVSSVSTGGSGGEDRLTENVTLNFAQVQVDYQPQKADGAKDGGPVKYGWNIRQNVQA.

The protein belongs to the hcp1 family. In terms of assembly, hexamer. Three hcp1 monomers form two closely related hexameric rings with a 40 Angstrom internal diameter.

The protein localises to the secreted. Its function is as follows. Required for assembly of the protein secretion apparatus HSI-I. Actively secreted during chronic infection of cystic fibrosis patients. The protein is Protein hcp1 (hcp1) of Pseudomonas aeruginosa (strain ATCC 15692 / DSM 22644 / CIP 104116 / JCM 14847 / LMG 12228 / 1C / PRS 101 / PAO1).